The sequence spans 147 residues: Male-specific protein scotti (147 aa).

The disordered stretch occupies residues 57 to 76 (EPPLGVFPAQGGPNGPPRLR). Asn128 carries N-linked (GlcNAc...) asparagine glycosylation.

The protein belongs to the male-specific scotti family.

Its function is as follows. Post-meiotically transcribed gene that has a role in late spermiogenesis; required for actin cone progression during spermatid individualization. The polypeptide is Male-specific protein scotti (Drosophila simulans (Fruit fly)).